The following is a 37-amino-acid chain: uncharacterized protein (37 aa).

A helical membrane pass occupies residues 1 to 21 (MQDLEIFLSIFAFIFVFYFGA).

The protein resides in the endoplasmic reticulum membrane. This is an uncharacterized protein from Saccharomyces cerevisiae (strain ATCC 204508 / S288c) (Baker's yeast).